The following is a 2181-amino-acid chain: Genome polyprotein (2181 aa).

Gly-80 carries the N-myristoyl glycine; by host lipid modification. 2 interaction with host receptor ANTXR1 regions span residues 316–337 (DYRT…PPNW) and 761–772 (RFGLYANPSGSG). The SF3 helicase domain maps to 1165–1333 (LGKTNLAQSL…YKKHTRLNFD (169 aa)). 1197 to 1204 (GKPGCGKS) contributes to the ATP binding site. The disordered stretch occupies residues 1472–1500 (EETESEGSVKAPRSENAYDGPKKNSKPPG). Tyr-1489 carries the post-translational modification O-(5'-phospho-RNA)-tyrosine. The Peptidase C3 domain occupies 1511 to 1704 (NVDMGFEAAV…AGTYISKLGL (194 aa)). Catalysis depends on His-1556, which acts as the For protease 3C activity and deubiquitinase activity. Asp-1592 acts as the For protease 3C activity in catalysis. Cys-1668 functions as the For protease 3C activity and deubiquitinase activity in the catalytic mechanism. Residues 1950 to 2068 (KNTYDVDYSA…GTDYDLDFNE (119 aa)) form the RdRp catalytic domain. Catalysis depends on for RdRp activity residues Asp-1956 and Asp-2054.

In terms of assembly, interacts with host entry receptor ANTRX1. Interacts with host IRF3; this interaction is involved in the suppression of IRF3 and IRF7 expression and phosphorylation by the virus. Interacts with host IRF7; this interaction is involved in the suppression of IRF3 and IRF7 expression and phosphorylation by the virus. Interacts with host MAVS; this interaction allows the cleavage of MAVS and subsequent suppression of host immunity. Interacts with host TRIF; this interaction allows the cleavage of TRIF and subsequent suppression of host immunity. Interacts with host TANK; this interaction allows the cleavage of TANK and subsequent suppression of host immunity. Interacts with host RIGI. Interacts with host TBK1. Interacts with host TRAF3. In terms of processing, specific enzymatic cleavages by the viral protease in vivo yield a variety of precursors and mature proteins. The polyprotein seems to be cotranslationally cleaved at the 2A/2B junction by a ribosomal skip from one codon to the next without formation of a peptide bond. This process would release the P1-2A peptide from the translational complex. Post-translationally, during virion maturation, immature virions are rendered infectious following cleavage of VP0 into VP4 and VP2. This maturation seems to be an autocatalytic event triggered by the presence of RNA in the capsid and is followed by a conformational change of the particle. Myristoylation is required during RNA encapsidation and formation of the mature virus particle. In terms of processing, uridylylated by the polymerase and is covalently linked to the 5'-end of genomic RNA. This uridylylated form acts as a nucleotide-peptide primer for the polymerase.

The protein localises to the virion. The protein resides in the host cytoplasm. Its subcellular location is the host nucleus. It localises to the host nucleolus. It is found in the host cytoplasmic vesicle membrane. It catalyses the reaction RNA(n) + a ribonucleoside 5'-triphosphate = RNA(n+1) + diphosphate. It carries out the reaction Selective cleavage of Gln-|-Gly bond in the poliovirus polyprotein. In other picornavirus reactions Glu may be substituted for Gln, and Ser or Thr for Gly.. The enzyme catalyses Thiol-dependent hydrolysis of ester, thioester, amide, peptide and isopeptide bonds formed by the C-terminal Gly of ubiquitin (a 76-residue protein attached to proteins as an intracellular targeting signal).. The catalysed reaction is ATP + H2O = ADP + phosphate + H(+). Functionally, forms an icosahedral capsid of pseudo T=3 symmetry with capsid proteins VP2 and VP3. Together they form an icosahedral capsid composed of 60 copies of each VP1, VP2, and VP3, with a diameter of approximately 325 Angstroms. VP4 lies on the inner surface of the protein shell formed by VP1, VP2 and VP3. All the three latter proteins contain a beta-sheet structure called beta-barrel jelly roll. VP1 is situated at the 12 fivefold axes, whereas VP2 and VP3 are located at the quasi-sixfold axes. Binds the host receptor ANTXR1 for attachment and uncoating (entry). Its function is as follows. Forms an icosahedral capsid of pseudo T=3 symmetry with capsid proteins VP2 and VP3. Together they form an icosahedral capsid composed of 60 copies of each VP1, VP2, and VP3, with a diameter of approximately 270 Angstroms. VP4 lies on the inner surface of the protein shell formed by VP1, VP2 and VP3. All the three latter proteins contain a beta-sheet structure called beta-barrel jelly roll. VP1 is situated at the 12 fivefold axes, whereas VP2 and VP3 are located at the quasi-sixfold axes. Binds the host receptor ANTXR1 for attachment and uncoating (entry). Forms an icosahedral capsid of pseudo T=3 symmetry with capsid proteins VP2 and VP3. Together they form an icosahedral capsid composed of 60 copies of each VP1, VP2, and VP3, with a diameter of approximately 270 Angstroms. VP4 lies on the inner surface of the protein shell formed by VP1, VP2 and VP3. All the three latter proteins contain a beta-sheet structure called beta-barrel jelly roll. VP1 is situated at the 12 fivefold axes, whereas VP2 and VP3 are located at the quasi-sixfold axes. Vp3 also seems to be involved in the binding to host receptor ANTXR1 for attachment and uncoating (entry). In terms of biological role, lies on the inner surface of the capsid shell. After binding to the host receptor, the capsid undergoes conformational changes. Capsid protein VP4 is released, capsid protein VP1 N-terminus is externalized, and together, they shape a pore in the host membrane through which the viral genome is translocated into the host cell cytoplasm. After genome has been released, the channel shrinks. Functionally, VP0 precursor is a component of immature procapsids. Its function is as follows. Mediates self-processing of the polyprotein by a translational effect termed 'ribosome skipping'. Mechanistically, 2A-mediated cleavage occurs between the C-terminal glycine and the proline of the downstream protein 2B. Plays an essential role in the virus replication cycle by acting as a viroporin. Creates a pore in the host endoplasmic reticulum and as a consequence releases Ca2+ in the cytoplasm of infected cell. In turn, high levels of cytoplasmic calcium may trigger membrane trafficking and transport of viral ER-associated proteins to viroplasms, sites of viral genome replication. In terms of biological role, associates with and induces structural rearrangements of intracellular membranes. Functionally, covalently linked to the 5'-end of both the positive-strand and negative-strand genomic RNAs. Acts as a genome-linked replication primer. Its function is as follows. Cysteine protease that generates mature viral proteins from the precursor polyprotein. Inactivates crucial host adapter molecules in order to suppress antiviral type-I interferon (type-I IFN) and NF-kappaB production to escape host antiviral innate immune responses. Deubiquitinase that acts on both lysine-48- and lysine-63-linked polyubiquitin chains and inhibits the ubiquitination of the ATP-dependent RNA helicase RIGI, TANK-binding kinase 1 (TBK1), and TNF receptor-associated factor 3 (TRAF3), thereby blocking the expression of IFN-beta and IFN stimulated gene 54 (ISG54). Induces host IRF3 and IRF7 degradation thereby suppressing IRF3- and IRF7-induced type-I IFN production. Also decreases host IRF3 phosphorylation leading to negligible IRF3 activation. Cleaves host MAVS, TRIF and TANK, which are then unable to regulate pattern recognition receptor (PRR)-mediated type-I IFN production. Inhibits the integrated stress response (ISR) in the infected cell by disrupting eIF4GI-G3BP1 interaction. Stress granule formation is thus inhibited. Replicates the genomic and antigenomic RNAs by recognizing replications specific signals. Performs VPg uridylylation. The chain is Genome polyprotein from Sus scrofa (Pig).